A 201-amino-acid polypeptide reads, in one-letter code: CASP-like protein 1E1 (201 aa).

Residues 1–36 (MESQFRPGFDVSQGAGGRASKFGDVVAPTSSTQLPG) are Cytoplasmic-facing. The chain crosses the membrane as a helical span at residues 37-57 (IILRIVAIVLTFISAVVMGAA). Residues 58–87 (RQTTTVTGIDAETALLTSITVTVKSTYSAA) lie on the Extracellular side of the membrane. The helical transmembrane segment at 88 to 108 (YVYFVVANVLVFFYSVVSLVL) threads the bilayer. The Cytoplasmic segment spans residues 109–127 (SMVNKARLTSMSLPFSIAD). Residues 128–148 (LLMVVLLFSSNGAAAAISVVA) traverse the membrane as a helical segment. The Extracellular portion of the chain corresponds to 149-173 (EKGQQNLAGWDKICNLFGGLCARVN). The helical transmembrane segment at 174 to 194 (AAIVLSMLASVAYVILVVFGM) threads the bilayer. Over 195-201 (ANLRRSQ) the chain is Cytoplasmic.

This sequence belongs to the Casparian strip membrane proteins (CASP) family. As to quaternary structure, homodimer and heterodimers.

Its subcellular location is the cell membrane. The sequence is that of CASP-like protein 1E1 from Musa acuminata (Banana).